The sequence spans 369 residues: Chaperone protein DnaJ (369 aa).

One can recognise a J domain in the interval 4 to 69; the sequence is SYYEILEVEK…KKRALYDRYG (66 aa). The CR-type zinc-finger motif lies at 130 to 207; sequence GCKKTIKVQY…CKGKTYILKD (78 aa). The Zn(2+) site is built by C143, C146, C159, C162, C181, C184, C195, and C198. 4 CXXCXGXG motif repeats span residues 143-150, 159-166, 181-188, and 195-202; these read CESCDGTG, CKQCNGQG, CGACQGKG, and CQACKGKT.

This sequence belongs to the DnaJ family. Homodimer. The cofactor is Zn(2+).

It localises to the cytoplasm. Its function is as follows. Participates actively in the response to hyperosmotic and heat shock by preventing the aggregation of stress-denatured proteins and by disaggregating proteins, also in an autonomous, DnaK-independent fashion. Unfolded proteins bind initially to DnaJ; upon interaction with the DnaJ-bound protein, DnaK hydrolyzes its bound ATP, resulting in the formation of a stable complex. GrpE releases ADP from DnaK; ATP binding to DnaK triggers the release of the substrate protein, thus completing the reaction cycle. Several rounds of ATP-dependent interactions between DnaJ, DnaK and GrpE are required for fully efficient folding. Also involved, together with DnaK and GrpE, in the DNA replication of plasmids through activation of initiation proteins. The protein is Chaperone protein DnaJ of Helicobacter pylori (strain ATCC 700392 / 26695) (Campylobacter pylori).